Here is a 410-residue protein sequence, read N- to C-terminus: Lissencephaly-1 homolog (410 aa).

The 33-residue stretch at 7 to 39 (QRDELNRAIADYLRSNGYEEAYSVFKKEAELDV) folds into the LisH domain. Residues 56-82 (TSVIRLQKKVMELESKLNEAKEEFTSG) adopt a coiled-coil conformation. 7 WD repeats span residues 106–147 (GHRS…RTLK), 148–187 (GHTD…CIRT), 190–229 (GHDH…CVKT), 232–271 (GHRE…CKAE), 274–333 (EHEH…CLMT), 336–377 (GHDN…KTLN), and 378–410 (AHEH…WECR).

The protein belongs to the WD repeat LIS1/nudF family. As to quaternary structure, can self-associate. Component of the cytosolic PAF-AH (I) heterotetrameric enzyme, which is composed of PAFAH1B1 (beta), PAFAH1B2 (alpha2) and PAFAH1B3 (alpha1) subunits. The catalytic activity of the enzyme resides in the alpha1 (PAFAH1B3) and alpha2 (PAFAH1B2) subunits, whereas the beta subunit (PAFAH1B1) has regulatory activity. Trimer formation is not essential for the catalytic activity. Interacts with dynein, dynactin, NDE1 and NDEL1.

Its subcellular location is the cytoplasm. The protein resides in the cytoskeleton. The protein localises to the microtubule organizing center. It is found in the centrosome. Its function is as follows. Regulatory subunit (beta subunit) of the cytosolic type I platelet-activating factor (PAF) acetylhydrolase (PAF-AH (I)), an enzyme that catalyzes the hydrolyze of the acetyl group at the sn-2 position of PAF and its analogs and participates in PAF inactivation. Regulates the PAF-AH (I) activity in a catalytic dimer composition-dependent manner. Positively regulates the activity of the minus-end directed microtubule motor protein dynein. May enhance dynein-mediated microtubule sliding by targeting dynein to the microtubule plus end. Required for several dynein- and microtubule-dependent processes such as the maintenance of Golgi integrity, the peripheral transport of microtubule fragments and the coupling of the nucleus and centrosome. May be required for proliferation of neuronal precursors and neuronal migration. The polypeptide is Lissencephaly-1 homolog (Gallus gallus (Chicken)).